The chain runs to 181 residues: MAENQNNLIWIDLEMTGLDPERDRIIEIATLVTDANLNILAEGPVLAVHQSDEQLGLMDEWNVRTHTGSGLVERVKASPFNDHDAELQTIEFLKQWVPAGTSPICGNSVGQDRRFLFRYMPELEAYFHYRYLDVSTLKELARRWKPEILAGFKKQNTHQALDDIRESVAELAYYREHFIQK.

The 164-residue stretch at 8 to 171 (LIWIDLEMTG…DDIRESVAEL (164 aa)) folds into the Exonuclease domain. Tyr-129 is a catalytic residue.

This sequence belongs to the oligoribonuclease family.

Its subcellular location is the cytoplasm. In terms of biological role, 3'-to-5' exoribonuclease specific for small oligoribonucleotides. This is Oligoribonuclease from Yersinia enterocolitica serotype O:8 / biotype 1B (strain NCTC 13174 / 8081).